A 217-amino-acid polypeptide reads, in one-letter code: Protein LURP-one-related 2 (217 aa).

The protein belongs to the LOR family.

In terms of biological role, might be related to the phospholipid scramblase and tubby-like superfamily of membrane tethered transcription factors. In Arabidopsis thaliana (Mouse-ear cress), this protein is Protein LURP-one-related 2.